Here is a 139-residue protein sequence, read N- to C-terminus: uncharacterized protein (139 aa).

The span at 1–11 shows a compositional bias: polar residues; sequence MALSMSLSSDI. Disordered regions lie at residues 1–80 and 100–139; these read MALS…AAAA and ASSP…LARS. The span at 63–80 shows a compositional bias: low complexity; it reads GAGSASAGGSRLAAAAAA.

This is an uncharacterized protein from Homo sapiens (Human).